Reading from the N-terminus, the 384-residue chain is 23S rRNA (uracil(747)-C(5))-methyltransferase RlmC (384 aa).

Residues Cys-3, Cys-11, Cys-14, and Cys-87 each contribute to the [4Fe-4S] cluster site. Gln-212, Phe-241, Glu-262, and Asn-309 together coordinate S-adenosyl-L-methionine. Cys-336 serves as the catalytic Nucleophile.

Belongs to the class I-like SAM-binding methyltransferase superfamily. RNA M5U methyltransferase family. RlmC subfamily.

The enzyme catalyses uridine(747) in 23S rRNA + S-adenosyl-L-methionine = 5-methyluridine(747) in 23S rRNA + S-adenosyl-L-homocysteine + H(+). Catalyzes the formation of 5-methyl-uridine at position 747 (m5U747) in 23S rRNA. The chain is 23S rRNA (uracil(747)-C(5))-methyltransferase RlmC from Shewanella amazonensis (strain ATCC BAA-1098 / SB2B).